Here is an 86-residue protein sequence, read N- to C-terminus: MASKKAGGSTKNGRDSQSKRLGVKRFGGEKVLPGTIIVRQRGTKFHLGNNVKMGRDYTIYSVVEGLVKFERFSKERFKVSVYPKAV.

A disordered region spans residues 1-26; that stretch reads MASKKAGGSTKNGRDSQSKRLGVKRF.

It belongs to the bacterial ribosomal protein bL27 family.

The polypeptide is Large ribosomal subunit protein bL27 (Bdellovibrio bacteriovorus (strain ATCC 15356 / DSM 50701 / NCIMB 9529 / HD100)).